A 200-amino-acid chain; its full sequence is Troponin I-like protein (200 aa).

Disordered stretches follow at residues 1 to 20 and 181 to 200; these read MGDE…AEVR and ENKA…ENEE. The stretch at 2-116 forms a coiled coil; it reads GDEEKRKMEE…EDAKYDLEYE (115 aa).

This sequence belongs to the troponin I family. Expressed in salivary gland, gut, muscle and cuticle (at protein level).

Its function is as follows. Inhibits endothelial cell proliferation and angiogenesis in a vertebrate host. Probably required for efficient blood feeding on vertebrate hosts. The polypeptide is Troponin I-like protein (Haemaphysalis longicornis (Bush tick)).